A 99-amino-acid polypeptide reads, in one-letter code: Acylphosphatase (99 aa).

The region spanning 5–97 (IRQVMVRGRV…YAGERFSILS (93 aa)) is the Acylphosphatase-like domain. Active-site residues include arginine 20 and asparagine 38.

Belongs to the acylphosphatase family.

The enzyme catalyses an acyl phosphate + H2O = a carboxylate + phosphate + H(+). The chain is Acylphosphatase (acyP) from Rhodopseudomonas palustris (strain BisB5).